A 411-amino-acid chain; its full sequence is cAMP-dependent protein kinase regulatory subunit (411 aa).

Positions 1-144 (MAESAFPSAQ…SWTPPYHEKT (144 aa)) are disordered. The dimerization and phosphorylation stretch occupies residues 23-159 (AAFQKISEED…RLKTAVSSNF (137 aa)). Low complexity predominate over residues 46 to 58 (SANAAAASSSTGS). Residues 85-96 (EEDEEGADEFPP) are compositionally biased toward acidic residues. Positions 119 to 136 (TSVSAESLNPTSAGSDSW) are enriched in polar residues. Serine 120 carries the phosphoserine modification. 3',5'-cyclic AMP is bound by residues 160–289 (LFSH…FLEE), glutamate 238, arginine 247, 292–411 (LLSS…PVPA), glutamate 359, and arginine 368.

The protein belongs to the cAMP-dependent kinase regulatory chain family. As to quaternary structure, tetramer, composed of 2 regulatory (R) and 2 catalytic (C) subunits. In the presence of cAMP it dissociates into 2 active monomeric C subunits and an R dimer.

This Aspergillus niger protein is cAMP-dependent protein kinase regulatory subunit (pkaR).